The following is a 313-amino-acid chain: D-alanine--D-alanine ligase (313 aa).

The ATP-grasp domain maps to 108-308 (KLVWQQTGVP…YSELVVKVLS (201 aa)). ATP is bound at residue 138-193 (VAKLGLPLFVKPASEGSSVAVLKVKTADALPAALAEAATHDKIVIVEKSIEGGGEY). Positions 262, 275, and 277 each coordinate Mg(2+).

Belongs to the D-alanine--D-alanine ligase family. The cofactor is Mg(2+). It depends on Mn(2+) as a cofactor.

Its subcellular location is the cytoplasm. It catalyses the reaction 2 D-alanine + ATP = D-alanyl-D-alanine + ADP + phosphate + H(+). Its pathway is cell wall biogenesis; peptidoglycan biosynthesis. In terms of biological role, cell wall formation. The sequence is that of D-alanine--D-alanine ligase from Burkholderia multivorans (strain ATCC 17616 / 249).